The following is a 331-amino-acid chain: Adenosine deaminase (331 aa).

2 residues coordinate Zn(2+): His-12 and His-14. Residues His-14, Asp-16, and Gly-170 each contribute to the substrate site. Residue His-197 participates in Zn(2+) binding. Residue Glu-200 is the Proton donor of the active site. A Zn(2+)-binding site is contributed by Asp-278. Residue Asp-279 participates in substrate binding.

The protein belongs to the metallo-dependent hydrolases superfamily. Adenosine and AMP deaminases family. Adenosine deaminase subfamily. Requires Zn(2+) as cofactor.

It catalyses the reaction adenosine + H2O + H(+) = inosine + NH4(+). The catalysed reaction is 2'-deoxyadenosine + H2O + H(+) = 2'-deoxyinosine + NH4(+). Functionally, catalyzes the hydrolytic deamination of adenosine and 2-deoxyadenosine. This is Adenosine deaminase from Shewanella sp. (strain MR-4).